Reading from the N-terminus, the 88-residue chain is Apolipoprotein C-I (88 aa).

An N-terminal signal peptide occupies residues 1 to 26; sequence MRLFLSLPVLVVVLAMVLEGPAPAQA.

It belongs to the apolipoprotein C1 family.

The protein resides in the secreted. Inhibitor of lipoprotein binding to the low density lipoprotein (LDL) receptor, LDL receptor-related protein, and very low density lipoprotein (VLDL) receptor. Associates with high density lipoproteins (HDL) and the triacylglycerol-rich lipoproteins in the plasma and makes up about 10% of the protein of the VLDL and 2% of that of HDL. Appears to interfere directly with fatty acid uptake and is also the major plasma inhibitor of cholesteryl ester transfer protein (CETP). Binds free fatty acids and reduces their intracellular esterification. Modulates the interaction of APOE with beta-migrating VLDL and inhibits binding of beta-VLDL to the LDL receptor-related protein. In Ailurus fulgens (Himalayan red panda), this protein is Apolipoprotein C-I (APOC1).